Consider the following 245-residue polypeptide: Myelin protein P0 (245 aa).

Positions 1–28 (MEPSGLRTPCSLLALVLLSALVLTPTLA) are cleaved as a signal peptide. The region spanning 29-143 (IEVYTDREVY…VGKSSYVHLQ (115 aa)) is the Ig-like V-type domain. Residues 29–153 (IEVYTDREVY…VQEKGPARAG (125 aa)) lie on the Extracellular side of the membrane. A disulfide bond links cysteine 49 and cysteine 125. Asparagine 120 is a glycosylation site (N-linked (GlcNAc...) asparagine). Residues 154–174 (LILGIIIAVALALVIVVTILI) form a helical membrane-spanning segment. Residues 175–245 (LLIRYCWLRR…GIGDSRKDRK (71 aa)) lie on the Cytoplasmic side of the membrane. Basic and acidic residues-rich tracts occupy residues 199–208 (KLHKAKDSSK) and 224–245 (TRGKSSEKKAKGGIGDSRKDRK). Residues 199 to 245 (KLHKAKDSSKRSSRQTPILYAMLDQTRGKSSEKKAKGGIGDSRKDRK) form a disordered region.

The protein belongs to the myelin P0 protein family.

The protein localises to the cell membrane. Its function is as follows. Creation of an extracellular membrane face which guides the wrapping process and ultimately compacts adjacent lamellae. The protein is Myelin protein P0 (mpz) of Xenopus laevis (African clawed frog).